A 532-amino-acid chain; its full sequence is UDP-glucuronosyltransferase 1A6 (532 aa).

The first 26 residues, 1 to 26 (MACLLRSFQRISAGVFFLALWGMVVG), serve as a signal peptide directing secretion. Residues Asn-294 and Asn-346 are each glycosylated (N-linked (GlcNAc...) asparagine). A helical transmembrane segment spans residues 490–506 (VIGFLLAVVLTVAFITF).

Belongs to the UDP-glycosyltransferase family. Isoform 1 interacts with isoform 3/i2 suggesting that oligomerization is involved in negative regulation of transferase activity by isoform 3. Isoform 1 also interacts with respective i2 isoforms of UGT1A1, UGT1A3, UGT1A4, UGT1A7, UGT1A8, UGT1A9 and UGT1A10. As to expression, expressed in skin. Isoforms 1 and 3 are expressed in kidney and liver. Isoform 1 but not isoform 2 is expressed in colon, esophagus and small intestine.

It localises to the microsome. The protein resides in the endoplasmic reticulum membrane. It catalyses the reaction glucuronate acceptor + UDP-alpha-D-glucuronate = acceptor beta-D-glucuronoside + UDP + H(+). The enzyme catalyses (5Z,8Z,11Z,14Z)-eicosatetraenoate + UDP-alpha-D-glucuronate = O-[(5Z),(8Z),(11Z),(14Z)-eicosatetraenoyl]-beta-D-glucuronate + UDP. The catalysed reaction is 15-hydroxy-(5Z,8Z,11Z,13E)-eicosatetraenoate + UDP-alpha-D-glucuronate = 15-O-(beta-D-glucuronosyl)-(5Z,8Z,11Z,14Z)-eicosatetraenoate + UDP + H(+). It carries out the reaction (E)-ferulate + UDP-alpha-D-glucuronate = (E)-4-O-(beta-D-glucuronosyl)-ferulate + UDP + H(+). It catalyses the reaction (E)-ferulate + UDP-alpha-D-glucuronate = (E)-ferulic acid beta-D-glucuronate ester + UDP. Its function is as follows. UDP-glucuronosyltransferase (UGT) that catalyzes phase II biotransformation reactions in which lipophilic substrates are conjugated with glucuronic acid to facilitate their inactivation and excretion from the body. Essential for the elimination and detoxification of drugs, xenobiotics and endogenous compounds. Involved in the glucuronidation of arachidonic acid (AA) and AA-derived eicosanoids including 15-HETE and 20-HETE. Conjugates small planar phenolic molecules such as 4-nitrophenol, 1-naphthol, and 4-methylumbelliferone. The bulky phenol 4-hydroxybiphenyl, androgens and estrogens are not substrates. 2-hydroxybiphenyl is an excellent substrate. Involved in the glucuronidation of the phytochemical ferulic acid at the phenolic or the carboxylic acid group. In terms of biological role, isoform 3 lacks transferase activity but acts as a negative regulator of isoform 1. The protein is UDP-glucuronosyltransferase 1A6 of Homo sapiens (Human).